The primary structure comprises 77 residues: Large ribosomal subunit protein bL28 (77 aa).

Belongs to the bacterial ribosomal protein bL28 family.

The chain is Large ribosomal subunit protein bL28 from Dechloromonas aromatica (strain RCB).